Consider the following 229-residue polypeptide: Internal virion protein gp7 (229 aa).

A propeptide spans Met-1–Glu-20 (removed in mature form).

It belongs to the podoviruses gp7 family. In terms of assembly, interacts with the internal virion protein gp20; this interaction forms a tube-like structure that may allow DNA ejection through the host membranes.

The protein resides in the virion. Inner capsid protein that plays a role in viral DNA ejection into the host cell. Assembles into an extracellular trans-envelope channel completed by the internal virion proteins gp7 and probably gp16. This channel allows the delivery of the viral genome into the cell cytoplasm. Displays membrane-association properties, may therefore form a simple channel spanning the outer membrane. This is Internal virion protein gp7 (7) from Salmonella phage P22 (Bacteriophage P22).